We begin with the raw amino-acid sequence, 420 residues long: Pregnancy-associated glycoprotein 2 (420 aa).

Positions 1-15 are cleaved as a signal peptide; that stretch reads MKWLVILGLVALSDC. Asn-56 and Asn-79 each carry an N-linked (GlcNAc...) asparagine glycan. A Peptidase A1 domain is found at 76–417; the sequence is YVGNISIGTP…DEGQNRIGLA (342 aa). Asp-94 is an active-site residue. 2 disulfide bridges follow: Cys-107–Cys-112 and Cys-268–Cys-272. Residue Asp-277 is part of the active site. A disulfide bridge links Cys-341 with Cys-376.

It belongs to the peptidase A1 family. Expressed throughout the chorion, with the signal localized exclusively over the trophectoderm.

The protein resides in the secreted. Its subcellular location is the extracellular space. This is Pregnancy-associated glycoprotein 2 (PAG2) from Sus scrofa (Pig).